We begin with the raw amino-acid sequence, 354 residues long: Galectin-9 (354 aa).

2 Galectin domains span residues Phe17 to Gln147 and Phe226 to Thr354. Residues Asn47, His60, Arg64, Asn74, Trp81–Lys87, His266, Arg270, Thr280, and Trp286–Ser292 each bind a beta-D-galactoside.

The isoform Long is expressed exclusively in the small intestine.

It is found in the cytoplasm. It localises to the nucleus. Its subcellular location is the secreted. Functionally, binds galactosides. Has high affinity for the Forssman pentasaccharide. Ligand for HAVCR2/TIM3. Binding to HAVCR2 induces T-helper type 1 lymphocyte (Th1) death. Also stimulates bactericidal activity in infected macrophages by causing macrophage activation and IL1B secretion which restricts intracellular bacterial growth. Ligand for P4HB; the interaction retains P4HB at the cell surface of Th2 T helper cells, increasing disulfide reductase activity at the plasma membrane, altering the plasma membrane redox state and enhancing cell migration. Ligand for CD44; the interaction enhances binding of SMAD3 to the FOXP3 promoter, leading to up-regulation of FOXP3 expression and increased induced regulatory T (iTreg) cell stability and suppressive function. Promotes ability of mesenchymal stromal cells to suppress T-cell proliferation. Expands regulatory T-cells and induces cytotoxic T-cell apoptosis following virus infection. Activates ERK1/2 phosphorylation inducing cytokine (IL-6, IL-8, IL-12) and chemokine (CCL2) production in mast and dendritic cells. Inhibits degranulation and induces apoptosis of mast cells. Induces maturation and migration of dendritic cells. Inhibits natural killer (NK) cell function. Can transform NK cell phenotype from peripheral to decidual during pregnancy. Astrocyte derived galectin-9 enhances microglial TNF production. May play a role in thymocyte-epithelial interactions relevant to the biology of the thymus. May provide the molecular basis for urate flux across cell membranes, allowing urate that is formed during purine metabolism to efflux from cells and serving as an electrogenic transporter that plays an important role in renal and gastrointestinal urate excretion. Highly selective to the anion urate. This chain is Galectin-9 (Lgals9), found in Rattus norvegicus (Rat).